The following is a 473-amino-acid chain: Reticulon-4 receptor (473 aa).

The signal sequence occupies residues 1-26; sequence MKRASAGGSRLLAWVLWLQAWQVAAP. 2 disulfides stabilise this stretch: Cys-27–Cys-33 and Cys-31–Cys-43. Residues 27 to 54 enclose the LRRNT domain; sequence CPGACVCYNEPKVTTSCPQQGLQAVPVG. LRR repeat units lie at residues 55-79, 81-103, 104-128, 129-152, 153-176, 178-200, 202-224, 225-248, and 250-273; these read IPAA…SFRA, RNLT…AFTG, LALL…TFHG, LGRL…LFRG, LAAL…TFRD, GNLT…AFRG, HSLD…AFRD, LGRL…ALAP, and RALQ…PLWA. Residue Asn-82 is glycosylated (N-linked (GlcNAc...) asparagine). N-linked (GlcNAc...) asparagine glycosylation is present at Asn-179. Positions 260–310 constitute an LRRCT domain; it reads NPWVCDCRARPLWAWLQKFRGSSSEVPCSLPQRLAGRDLKRLAANDLQGCA. 3 cysteine pairs are disulfide-bonded: Cys-264–Cys-287, Cys-266–Cys-335, and Cys-309–Cys-336. The interval 346 to 447 is disordered; the sequence is VLEPGRPASA…GGGTGDSEGS (102 aa). The span at 413–429 shows a compositional bias: basic residues; it reads PRRRPGCSRKNRTRSHC. Residues 434–445 are compositionally biased toward gly residues; the sequence is AGSGGGGTGDSE. The GPI-anchor amidated serine moiety is linked to residue Ser-447. A propeptide spans 448–473 (removed in mature form); it reads GALPSLTCSLTPLGLALVLWTVLGPC.

Belongs to the Nogo receptor family. Homodimer. Interacts with MAG. Interacts with RTN4. Interacts with NGFR. Interacts with LINGO1. Interacts with KIAA0319L. Interacts with OLFM1; this inhibits interaction with LINGO1 and NGFR. Interacts with OMG. In terms of processing, N-glycosylated. O-glycosylated. Contains terminal sialic acid groups on its glycan chains. Widespread in the brain but highest levels in the gray matter. Low levels in heart and kidney; not expressed in oligodendrocytes (white matter).

The protein localises to the cell membrane. It localises to the membrane raft. It is found in the cell projection. Its subcellular location is the dendrite. The protein resides in the axon. The protein localises to the perikaryon. Functionally, receptor for RTN4, OMG and MAG. Functions as a receptor for the sialylated gangliosides GT1b and GM1. Besides, functions as a receptor for chondroitin sulfate proteoglycans. Can also bind heparin. Intracellular signaling cascades are triggered via the coreceptor NGFR. Signaling mediates activation of Rho and downstream reorganization of the actin cytoskeleton. Mediates axonal growth inhibition. Plays a role in regulating axon regeneration and neuronal plasticity in the adult central nervous system. Plays a role in postnatal brain development. Required for normal axon migration across the brain midline and normal formation of the corpus callosum. Protects motoneurons against apoptosis; protection against apoptosis is probably mediated via interaction with MAG. Acts in conjunction with RTN4 and LINGO1 in regulating neuronal precursor cell motility during cortical development. Like other family members, plays a role in restricting the number dendritic spines and the number of synapses that are formed during brain development. The protein is Reticulon-4 receptor (RTN4R) of Homo sapiens (Human).